The chain runs to 402 residues: Peptidyl-prolyl cis-trans isomerase FKBP8 (402 aa).

Over residues 28-39 (DGVDDAEEEDDL) the composition is skewed to acidic residues. The tract at residues 28–54 (DGVDDAEEEDDLSGLPPLEDMGQPTVE) is disordered. Positions 110-194 (GQVVTVHLQM…CLEVTLKTAE (85 aa)) constitute a PPIase FKBP-type domain. One copy of the TPR 1 repeat lies at 211–244 (ANRKRECGNAHYQRADFVLAANSYDLAIKAITSN). Residues lysine 239, lysine 261, lysine 263, and lysine 274 each participate in a glycyl lysine isopeptide (Lys-Gly) (interchain with G-Cter in ubiquitin) cross-link. TPR repeat units follow at residues 262-295 (VKCLNNLAASQLKLDHYRAALRSCSQVLEHQPDN) and 296-329 (IKALFRKGKVLAQQGEYSEAIPILRAALKLEPSN). Position 286 is a phosphoserine (serine 286). Residues lysine 297, lysine 304, lysine 324, lysine 330, lysine 338, lysine 341, and lysine 342 each participate in a glycyl lysine isopeptide (Lys-Gly) (interchain with G-Cter in ubiquitin) cross-link. A helical membrane pass occupies residues 380–400 (WLFGATAVALGGVALSVVIAA).

Homomultimers or heteromultimers (Potential). Forms heterodimer with calmodulin. When activated by calmodulin and calcium, interacts with the BH4 domain of BCL2 and weakly with BCLX isoform Bcl-X(L). Does not bind and inhibit calcineurin. Interacts with ZFYVE27; may negatively regulate ZFYVE27 phosphorylation. Requires Ca(2+) as cofactor. In terms of processing, ubiquitinated by PRKN during mitophagy, leading to its degradation and enhancement of mitophagy. Deubiquitinated by USP30. In terms of tissue distribution, detected throughout the embryonic body, in caudal neural tube, limbs and head. Detected in adult retina, brain, heart, kidney, liver, pancreas, lung, testis and urinary bladder (at protein level). Detected in adult brain, kidney, liver, testis and trigeminal nerve, and in embryo. Detected at lower levels in lung, spleen, heart and ovary. Widely expressed in forebrain. Detected in the Purkinje cell layer in the cerebellum and in hippocampus neurons.

The protein localises to the mitochondrion membrane. The enzyme catalyses [protein]-peptidylproline (omega=180) = [protein]-peptidylproline (omega=0). Constitutively inactive PPiase, which becomes active when bound to calmodulin and calcium. Seems to act as a chaperone for BCL2, targets it to the mitochondria and modulates its phosphorylation state. The BCL2/FKBP8/calmodulin/calcium complex probably interferes with the binding of BCL2 to its targets. The active form of FKBP8 may therefore play a role in the regulation of apoptosis. Required for normal embryonic development. The polypeptide is Peptidyl-prolyl cis-trans isomerase FKBP8 (Fkbp8) (Mus musculus (Mouse)).